The following is a 783-amino-acid chain: FYN-binding protein 1 (783 aa).

2 stretches are compositionally biased toward polar residues: residues 1-18 (MAKY…SVNS) and 25-45 (GPNS…QGNA). The disordered stretch occupies residues 1–502 (MAKYNTGGNP…KEKKEQEIKK (502 aa)). Lys3 carries the N6-acetyllysine modification. Residues Ser28 and Ser46 each carry the phosphoserine modification. Basic and acidic residues predominate over residues 69–79 (SSEEKPDKEPK). Position 225 is a phosphoserine (Ser225). 2 stretches are compositionally biased toward basic and acidic residues: residues 240–252 (PARE…DHAG) and 278–290 (NGEE…KIDA). Phosphoserine is present on Ser329. The segment covering 345–363 (KPLPPLFTLGPPPPKPNRP) has biased composition (pro residues). An interaction with SKAP1 region spans residues 348–448 (PPLFTLGPPP…QDGVTHSDGA (101 aa)). Residues 374-387 (TSSGNSTSKGQTSY) are compositionally biased toward polar residues. Residues 392-424 (LPPPPPSHPASQPPLPASHPSQPPVPSLPPRNI) show a composition bias toward pro residues. Residues 451-465 (LDEEQDSEGETYEDI) are compositionally biased toward acidic residues. The stretch at 456-507 (DSEGETYEDIEASKEREKKREKEEKKRLELEKKEQKEKEKKEQEIKKKFKLT) forms a coiled coil. At Ser457 the chain carries Phosphoserine. The short motif at 462 to 465 (YEDI) is the SH2-binding element. The span at 466 to 501 (EASKEREKKREKEEKKRLELEKKEQKEKEKKEQEIK) shows a compositional bias: basic and acidic residues. The short motif at 469–505 (KEREKKREKEEKKRLELEKKEQKEKEKKEQEIKKKFK) is the Nuclear localization signal element. Residues 511-572 (QVIHLAKACC…KTTAVEIDYD (62 aa)) form the SH3 1 domain. Tyr571 bears the Phosphotyrosine mark. Ser573 and Ser580 each carry phosphoserine. The SH2-binding; to LCP2 signature appears at 595–598 (YDDV). Residues 598–678 (VAEQDDISSH…GTNVGKAKTE (81 aa)) are disordered. Composition is skewed to acidic residues over residues 620–635 (PDDD…DADD) and 646–656 (MGDEVYDDVDT). The SH2-binding; to FYN motif lies at 625 to 628 (YDGI). Phosphotyrosine is present on Tyr651. Positions 674-700 (KAKTEEKDLKKLKKQEKEEKDFRKKFK) match the Nuclear localization signal motif. In terms of domain architecture, SH3 2 spans 700-768 (KYDGEIRVLY…LRSYLADNDG (69 aa)).

In terms of assembly, part of a complex consisting of SKAP2, FYB1 and PTPNS1. Part of a complex consisting of SKAP2, FYB1 and LILRB3. Part of a complex consisting of SKAP1, FYB1 and CLNK. Interacts with CLNK (via its SH2 domain); this interaction allows SKAP1 and FYB1 to recruit FYN to the complex, thus promoting the phosphorylation of CLNK by FYN. Interacts with FYN. Interacts with LCP2. Interacts with SKAP1. Interacts with SKAP2. Interacts with FASLG. Interacts with EVL. Interacts with TMEM47. Interacts with LCK. T-cell receptor ligation leads to increased tyrosine phosphorylation. As to expression, expressed in hematopoietic tissues such as myeloid and T-cells, spleen and thymus. Not expressed in B-cells, nor in non-lymphoid tissues.

Its subcellular location is the cytoplasm. It localises to the nucleus. The protein localises to the cell junction. Acts as an adapter protein of the FYN and LCP2 signaling cascades in T-cells. May play a role in linking T-cell signaling to remodeling of the actin cytoskeleton. Modulates the expression of IL2. Involved in platelet activation. Prevents the degradation of SKAP1 and SKAP2. May be involved in high affinity immunoglobulin epsilon receptor signaling in mast cells. This is FYN-binding protein 1 from Homo sapiens (Human).